Consider the following 156-residue polypeptide: Transcriptional regulator MraZ (156 aa).

SpoVT-AbrB domains follow at residues 5–51 (TFEK…GKAL) and 80–123 (MAKL…SREA).

It belongs to the MraZ family. In terms of assembly, forms oligomers.

It is found in the cytoplasm. Its subcellular location is the nucleoid. The sequence is that of Transcriptional regulator MraZ from Caulobacter vibrioides (strain ATCC 19089 / CIP 103742 / CB 15) (Caulobacter crescentus).